Here is a 269-residue protein sequence, read N- to C-terminus: Tryptophan synthase alpha chain (269 aa).

Catalysis depends on proton acceptor residues Glu49 and Asp60.

The protein belongs to the TrpA family. Tetramer of two alpha and two beta chains.

It carries out the reaction (1S,2R)-1-C-(indol-3-yl)glycerol 3-phosphate + L-serine = D-glyceraldehyde 3-phosphate + L-tryptophan + H2O. Its pathway is amino-acid biosynthesis; L-tryptophan biosynthesis; L-tryptophan from chorismate: step 5/5. Functionally, the alpha subunit is responsible for the aldol cleavage of indoleglycerol phosphate to indole and glyceraldehyde 3-phosphate. This Klebsiella aerogenes (Enterobacter aerogenes) protein is Tryptophan synthase alpha chain.